Reading from the N-terminus, the 82-residue chain is RNA-binding protein KhpA (82 aa).

In terms of domain architecture, KH spans 35–82; the sequence is STILELRVSQSDVGKIIGRRGRIARAIRTLLGACAAKTNRRVQLEILD.

The protein belongs to the KhpA RNA-binding protein family. As to quaternary structure, forms a complex with KhpB.

Its subcellular location is the cytoplasm. Functionally, a probable RNA chaperone. Forms a complex with KhpB which binds to cellular RNA and controls its expression. Plays a role in peptidoglycan (PG) homeostasis and cell length regulation. This Borreliella burgdorferi (strain ATCC 35210 / DSM 4680 / CIP 102532 / B31) (Borrelia burgdorferi) protein is RNA-binding protein KhpA.